A 509-amino-acid chain; its full sequence is Anaerobic nitric oxide reductase flavorubredoxin (509 aa).

The segment at 30–210 (LQGSSYNSYL…PFSRLVTAKI (181 aa)) is zinc metallo-hydrolase. Fe cation-binding residues include His79, Glu81, Asp83, His147, Asp166, and His227. Residues 254-393 (ITLFYDTMSN…VCREHGREIA (140 aa)) enclose the Flavodoxin-like domain. FMN contacts are provided by residues 260–264 (TMSNN) and 342–369 (AFGS…ETTL). The Rubredoxin-like domain maps to 457 to 508 (SGCMQCSVCQWIYDPALGEPMQDVTPGTMWSDVPDSFLCPECGLGKDVFNPI). Fe cation contacts are provided by Cys462, Cys465, Cys495, and Cys498.

In the N-terminal section; belongs to the zinc metallo-hydrolase group 3 family. Homotetramer. The cofactor is Fe cation. FMN is required as a cofactor.

The protein localises to the cytoplasm. It functions in the pathway nitrogen metabolism; nitric oxide reduction. Functionally, anaerobic nitric oxide reductase; uses NADH to detoxify nitric oxide (NO), protecting several 4Fe-4S NO-sensitive enzymes. Has at least 2 reductase partners, only one of which (NorW, flavorubredoxin reductase) has been identified. NO probably binds to the di-iron center; electrons enter from the NorW at rubredoxin and are transferred sequentially to the FMN center and the di-iron center. Also able to function as an aerobic oxygen reductase. This chain is Anaerobic nitric oxide reductase flavorubredoxin, found in Pectobacterium atrosepticum (strain SCRI 1043 / ATCC BAA-672) (Erwinia carotovora subsp. atroseptica).